The primary structure comprises 249 residues: Ubiquinone biosynthesis O-methyltransferase (249 aa).

The tract at residues 1-21 is disordered; the sequence is MIPEVSNEASQPAAHRQENVD. S-adenosyl-L-methionine-binding residues include arginine 52, glycine 72, aspartate 93, and methionine 137.

This sequence belongs to the methyltransferase superfamily. UbiG/COQ3 family.

It catalyses the reaction a 3-demethylubiquinol + S-adenosyl-L-methionine = a ubiquinol + S-adenosyl-L-homocysteine + H(+). It carries out the reaction a 3-(all-trans-polyprenyl)benzene-1,2-diol + S-adenosyl-L-methionine = a 2-methoxy-6-(all-trans-polyprenyl)phenol + S-adenosyl-L-homocysteine + H(+). Its pathway is cofactor biosynthesis; ubiquinone biosynthesis. Functionally, O-methyltransferase that catalyzes the 2 O-methylation steps in the ubiquinone biosynthetic pathway. The sequence is that of Ubiquinone biosynthesis O-methyltransferase from Sodalis glossinidius (strain morsitans).